The primary structure comprises 825 residues: NT-3 growth factor receptor (825 aa).

Residues 1 to 31 form the signal peptide; the sequence is MDVSLCPAKCSFWRIFLLGSVWLDYVGSVLA. 2 disulfide bridges follow: C32-C38 and C36-C45. The Extracellular portion of the chain corresponds to 32–429; it reads CPANCVCSKT…TVTHKPEEDT (398 aa). 3 N-linked (GlcNAc...) asparagine glycosylation sites follow: N68, N72, and N79. LRR repeat units follow at residues 104 to 125 and 128 to 149; these read GLQK…AFAK and HLRY…LFQT. N133 and N163 each carry an N-linked (GlcNAc...) asparagine glycan. The 50-residue stretch at 160–209 folds into the LRRCT domain; it reads NFFNCSCDIRWMQLWQEQGEAKLNSQNLYCINTDGSQLPLFRMNISQCDL. 2 cysteine pairs are disulfide-bonded: C164/C189 and C166/C207. 7 N-linked (GlcNAc...) asparagine glycosylation sites follow: N203, N218, N232, N259, N267, N272, and N294. 2 consecutive Ig-like C2-type domains span residues 210 to 300 and 309 to 382; these read PEIS…VALT and SLEE…IAKN. A disulfide bond links C231 and C284. A disulfide bond links C320 and C362. N-linked (GlcNAc...) asparagine glycans are attached at residues N375 and N388. The chain crosses the membrane as a helical span at residues 430 to 453; sequence FGVSIAVGLAAFACVLLVVLFVMI. The Cytoplasmic portion of the chain corresponds to 454–825; sequence NKYGRRSKFG…ATPIYLDILG (372 aa). Position 493 is a phosphoserine (S493). The residue at position 516 (Y516) is a Phosphotyrosine; by autocatalysis. Residues 538 to 825 form the Protein kinase domain; that stretch reads IVLKRELGEG…ATPIYLDILG (288 aa). Residues 544-552 and K572 contribute to the ATP site; that span reads LGEGAFGKV. D679 acts as the Proton acceptor in catalysis. Phosphotyrosine; by autocatalysis is present on residues Y705, Y709, and Y710.

The protein belongs to the protein kinase superfamily. Tyr protein kinase family. Insulin receptor subfamily. In terms of assembly, exists in a dynamic equilibrium between monomeric (low affinity) and dimeric (high affinity) structures. Binds SH2B2. Interacts with SQSTM1 and KIDINS220. Interacts with PTPRS. Interacts with MAPK8IP3/JIP3. Ligand-mediated auto-phosphorylation.

The protein localises to the membrane. It carries out the reaction L-tyrosyl-[protein] + ATP = O-phospho-L-tyrosyl-[protein] + ADP + H(+). Its function is as follows. Receptor tyrosine kinase involved in nervous system and probably heart development. Upon binding of its ligand NTF3/neurotrophin-3, NTRK3 autophosphorylates and activates different signaling pathways, including the phosphatidylinositol 3-kinase/AKT and the MAPK pathways, that control cell survival and differentiation. This is NT-3 growth factor receptor (NTRK3) from Pan troglodytes (Chimpanzee).